The following is a 580-amino-acid chain: 3-(3-hydroxy-phenyl)propionate/3-hydroxycinnamic acid hydroxylase (580 aa).

Residues 14-43 (DVLVVGAGPVGLTLANILGLQGIRTVVVEE) and 291-301 (FRRGRLLLAGD) contribute to the FAD site.

The protein belongs to the PheA/TfdB FAD monooxygenase family. FAD serves as cofactor.

The catalysed reaction is 3-(3-hydroxyphenyl)propanoate + NADH + O2 + H(+) = 3-(2,3-dihydroxyphenyl)propanoate + NAD(+) + H2O. It carries out the reaction (2E)-3-(3-hydroxyphenyl)prop-2-enoate + NADH + O2 + H(+) = (2E)-3-(2,3-dihydroxyphenyl)prop-2-enoate + NAD(+) + H2O. It functions in the pathway aromatic compound metabolism; 3-phenylpropanoate degradation. Functionally, catalyzes the insertion of one atom of molecular oxygen into position 2 of the phenyl ring of 3-(3-hydroxyphenyl)propionate (3-HPP) and hydroxycinnamic acid (3HCI). The polypeptide is 3-(3-hydroxy-phenyl)propionate/3-hydroxycinnamic acid hydroxylase (Mycobacterium avium (strain 104)).